Here is a 251-residue protein sequence, read N- to C-terminus: Imidazole glycerol phosphate synthase subunit HisF (251 aa).

Active-site residues include Asp11 and Asp130.

This sequence belongs to the HisA/HisF family. In terms of assembly, heterodimer of HisH and HisF.

The protein localises to the cytoplasm. The enzyme catalyses 5-[(5-phospho-1-deoxy-D-ribulos-1-ylimino)methylamino]-1-(5-phospho-beta-D-ribosyl)imidazole-4-carboxamide + L-glutamine = D-erythro-1-(imidazol-4-yl)glycerol 3-phosphate + 5-amino-1-(5-phospho-beta-D-ribosyl)imidazole-4-carboxamide + L-glutamate + H(+). The protein operates within amino-acid biosynthesis; L-histidine biosynthesis; L-histidine from 5-phospho-alpha-D-ribose 1-diphosphate: step 5/9. IGPS catalyzes the conversion of PRFAR and glutamine to IGP, AICAR and glutamate. The HisF subunit catalyzes the cyclization activity that produces IGP and AICAR from PRFAR using the ammonia provided by the HisH subunit. The sequence is that of Imidazole glycerol phosphate synthase subunit HisF from Prosthecochloris aestuarii (strain DSM 271 / SK 413).